Consider the following 574-residue polypeptide: Protein misato (574 aa).

It belongs to the misato family.

The protein resides in the mitochondrion. The protein is Protein misato (mst) of Drosophila melanogaster (Fruit fly).